The chain runs to 569 residues: Zinc finger and BTB domain-containing protein 7A (569 aa).

The region spanning 34 to 101 (CDVVILVEGR…AYTATLTVST (68 aa)) is the BTB domain. The disordered stretch occupies residues 214–304 (YGPGPPADRP…LSGAAEGEDG (91 aa)). Residues 275–569 (EEEAAALSEA…VATAEGNFAT (295 aa)) are mediates interaction with KHDRBS1. Residues 279–288 (AALSEAAPEP) are compositionally biased toward low complexity. Residues serine 331 and serine 335 each carry the phosphoserine modification. The segment at 343–569 (MDYYLKYFSG…VATAEGNFAT (227 aa)) is mediates interaction with RELA. The mediates interaction with SMAD4 stretch occupies residues 371-569 (RAKAFQKCPI…VATAEGNFAT (199 aa)). 2 consecutive C2H2-type zinc fingers follow at residues 376-398 (QKCP…IRTH) and 404-426 (YECN…MRKH). Residue lysine 430 forms a Glycyl lysine isopeptide (Lys-Gly) (interchain with G-Cter in SUMO2) linkage. The C2H2-type 3 zinc-finger motif lies at 432–454 (YLCQQCGAAFAHNYDLKNHMRVH). The segment at 460–484 (YQCDSCCKTFVRSDHLHRHLKKDGC) adopts a C2H2-type 4; atypical zinc-finger fold. The interval 480-569 (KKDGCNGVPS…VATAEGNFAT (90 aa)) is disordered. The span at 498–519 (RGVPPDVPAGAGAPPGLPDAPR) shows a compositional bias: low complexity. Lysine 527 participates in a covalent cross-link: Glycyl lysine isopeptide (Lys-Gly) (interchain with G-Cter in SUMO2). Serine 537 carries the post-translational modification Phosphoserine. A compositionally biased stretch (gly residues) spans 548–557 (GSGGDDGAGG).

As to quaternary structure, homodimer. Interacts with BCL6. Interacts with RELA; involved in the control by RELA of the accessibility of target gene promoters. Interacts with AR (via NR LBD domain); the interaction is direct and androgen-dependent. Interacts with NCOR1. Interacts with NCOR2. Interacts with SMAD4; the interaction is direct and stimulated by TGFB1. Interacts with HDAC1. Interacts with SP1; ZBTB7A prevents the binding to GC-rich motifs in promoters and represses the transcriptional activity of SP1. Interacts with the DNA-dependent protein kinase complex/DNA-PKc. Interacts with KHDRBS1; negatively regulates KHDRBS1 splicing activity. Sumoylated. Undergoes sumoylation with SUMO1 that may regulate its transcriptional activity. In terms of tissue distribution, widely expressed. In normal thymus, expressed in medullary epithelial cells and Hassle's corpuscles (at protein level). In the spleen, mainly expressed in the white pulp germinal centers (at protein level). Up-regulated in thymic lymphomas.

It is found in the nucleus. In terms of biological role, transcription factor that represses the transcription of a wide range of genes involved in cell proliferation and differentiation. Directly and specifically binds to the consensus sequence 5'-[GA][CA]GACCCCCCCCC-3' and represses transcription both by regulating the organization of chromatin and through the direct recruitment of transcription factors to gene regulatory regions. Negatively regulates SMAD4 transcriptional activity in the TGF-beta signaling pathway through these two mechanisms. That is, recruits the chromatin regulator HDAC1 to the SMAD4-DNA complex and in parallel prevents the recruitment of the transcriptional activators CREBBP and EP300. Collaborates with transcription factors like RELA to modify the accessibility of gene transcription regulatory regions to secondary transcription factors. Also directly interacts with transcription factors like SP1 to prevent their binding to DNA. Functions as an androgen receptor/AR transcriptional corepressor by recruiting NCOR1 and NCOR2 to the androgen response elements/ARE on target genes. Thereby, negatively regulates androgen receptor signaling and androgen-induced cell proliferation. Involved in the switch between fetal and adult globin expression during erythroid cells maturation. Through its interaction with the NuRD complex regulates chromatin at the fetal globin genes to repress their transcription. Specifically represses the transcription of the tumor suppressor ARF isoform from the CDKN2A gene. Efficiently abrogates E2F1-dependent CDKN2A transactivation. Regulates chondrogenesis through the transcriptional repression of specific genes via a mechanism that also requires histone deacetylation. Regulates cell proliferation through the transcriptional regulation of genes involved in glycolysis. Involved in adipogenesis through the regulation of genes involved in adipocyte differentiation. Plays a key role in the differentiation of lymphoid progenitors into B and T lineages. Promotes differentiation towards the B lineage by inhibiting the T-cell instructive Notch signaling pathway through the specific transcriptional repression of Notch downstream target genes. Also regulates osteoclast differentiation. May also play a role, independently of its transcriptional activity, in double-strand break repair via classical non-homologous end joining/cNHEJ. Recruited to double-strand break sites on damage DNA, interacts with the DNA-dependent protein kinase complex and directly regulates its stability and activity in DNA repair. May also modulate the splicing activity of KHDRBS1 toward BCL2L1 in a mechanism which is histone deacetylase-dependent and thereby negatively regulates the pro-apoptotic effect of KHDRBS1. This Mus musculus (Mouse) protein is Zinc finger and BTB domain-containing protein 7A.